A 497-amino-acid chain; its full sequence is Serine carboxypeptidase-like 20 (497 aa).

The signal sequence occupies residues 1–29 (MSIITMVWLMKVFVFVTLLSLVFVITESA). Intrachain disulfides connect cysteine 90-cysteine 386, cysteine 254-cysteine 266, and cysteine 289-cysteine 353. Asparagine 111 and asparagine 146 each carry an N-linked (GlcNAc...) asparagine glycan. Residue serine 186 is part of the active site. A glycan (N-linked (GlcNAc...) asparagine) is linked at asparagine 249. Residue asparagine 405 is glycosylated (N-linked (GlcNAc...) asparagine). Aspartate 421 is an active-site residue. An N-linked (GlcNAc...) asparagine glycan is attached at asparagine 463. Histidine 474 is an active-site residue. The short motif at 495–497 (SKI) is the Microbody targeting signal element.

It belongs to the peptidase S10 family. Ubiquitous.

The protein localises to the secreted. Functionally, probable carboxypeptidase. The polypeptide is Serine carboxypeptidase-like 20 (SCPL20) (Arabidopsis thaliana (Mouse-ear cress)).